Reading from the N-terminus, the 132-residue chain is Insulin-like 3 (132 aa).

Residues 1 to 24 (MSPRPLAWALVLLGAALAVALALG) form the signal peptide. Intrachain disulfides connect C36–C117, C48–C130, and C116–C121. Residues 61–104 (VAGGDRELLQWLEGRHLHGQVSDGDPMLVLVPQALPQASLHHHH) constitute a propeptide, c peptide like.

This sequence belongs to the insulin family. As to quaternary structure, heterodimer of a B chain and an A chain linked by two disulfide bonds. More strongly expressed in testis than in ovary.

The protein localises to the secreted. Seems to play a role in testicular function. May be a trophic hormone with a role in testicular descent in fetal life. Is a ligand for LGR8 receptor. This Canis lupus familiaris (Dog) protein is Insulin-like 3 (INSL3).